A 431-amino-acid chain; its full sequence is Sorting nexin-31 (431 aa).

One can recognise a PX domain in the interval 1 to 107; the sequence is MHICIPVTEE…DYFRKLQMDT (107 aa).

It belongs to the sorting nexin family.

May be involved in protein trafficking. The sequence is that of Sorting nexin-31 (snx31) from Xenopus laevis (African clawed frog).